Here is a 325-residue protein sequence, read N- to C-terminus: MLLPETPALLALRQAVRAWTVAFEPRRRVVVALSGGADSLALTAAAVAETDSVDALIVDHRLQPGSDAVARSAADQALALGCRTATVLTVDVAEGGSLEAAAREARYSALRDARTDLPVLLGHTLDDQAETVLLGLSRGSGGRSIQGMAAFDAPWGRPLLGIRRSVTRAACVDLGITPWEDPHNNNPEFTRVRLRHEALPLLEEILGGGVAEALARTATQLREDGEALDEYAEALLLRAVVDGEVEVDTLAEAPTAIRRRALRAWLLQGGAKALTDKQLRAVDALVIDWRGQGGVAIGGGTPEARLVAARRRGRLILGFEDRRRV.

34–39 (SGGADS) serves as a coordination point for ATP.

The protein belongs to the tRNA(Ile)-lysidine synthase family.

The protein resides in the cytoplasm. It carries out the reaction cytidine(34) in tRNA(Ile2) + L-lysine + ATP = lysidine(34) in tRNA(Ile2) + AMP + diphosphate + H(+). In terms of biological role, ligates lysine onto the cytidine present at position 34 of the AUA codon-specific tRNA(Ile) that contains the anticodon CAU, in an ATP-dependent manner. Cytidine is converted to lysidine, thus changing the amino acid specificity of the tRNA from methionine to isoleucine. In Rhodococcus erythropolis (strain PR4 / NBRC 100887), this protein is tRNA(Ile)-lysidine synthase.